We begin with the raw amino-acid sequence, 2352 residues long: Cell wall alpha-1,3-glucan synthase mok12 (2352 aa).

The interval 1786–1813 (SNDFGIREVPLSDANQSSQADSTSIDRY) is disordered. The segment covering 1798–1813 (DANQSSQADSTSIDRY) has biased composition (polar residues).

This sequence belongs to the glycosyltransferase group 1 family.

The enzyme catalyses [(1-&gt;3)-alpha-D-glucosyl](n) + UDP-alpha-D-glucose = [(1-&gt;3)-alpha-D-glucosyl](n+1) + UDP + H(+). The chain is Cell wall alpha-1,3-glucan synthase mok12 (mok12) from Schizosaccharomyces pombe (strain 972 / ATCC 24843) (Fission yeast).